The primary structure comprises 317 residues: NADH-quinone oxidoreductase subunit H 1 (317 aa).

The next 8 membrane-spanning stretches (helical) occupy residues 7–27 (IWVN…MLSW), 74–94 (AVFV…FAVV), 107–127 (IGVL…VLGG), 147–167 (LSYE…AGSF), 179–199 (LWFC…GIAE), 230–250 (FFIG…TLFF), 257–277 (VLPP…CFVL), and 297–317 (VMLP…LSVA).

It belongs to the complex I subunit 1 family. In terms of assembly, NDH-1 is composed of 14 different subunits. Subunits NuoA, H, J, K, L, M, N constitute the membrane sector of the complex.

The protein resides in the cell inner membrane. It carries out the reaction a quinone + NADH + 5 H(+)(in) = a quinol + NAD(+) + 4 H(+)(out). Functionally, NDH-1 shuttles electrons from NADH, via FMN and iron-sulfur (Fe-S) centers, to quinones in the respiratory chain. The immediate electron acceptor for the enzyme in this species is believed to be ubiquinone. Couples the redox reaction to proton translocation (for every two electrons transferred, four hydrogen ions are translocated across the cytoplasmic membrane), and thus conserves the redox energy in a proton gradient. This subunit may bind ubiquinone. The protein is NADH-quinone oxidoreductase subunit H 1 of Nitrosospira multiformis (strain ATCC 25196 / NCIMB 11849 / C 71).